Consider the following 294-residue polypeptide: HTH-type transcriptional activator AmpR (294 aa).

The HTH lysR-type domain occupies 6-63 (IPLNSLRAFEAAARQLSFTKAAIELNVTHAAISQQVKALEQRLNCRLFIRISRGLVLT). Residues 23-42 (FTKAAIELNVTHAAISQQVK) constitute a DNA-binding region (H-T-H motif).

Belongs to the LysR transcriptional regulatory family.

The protein localises to the cytoplasm. Its function is as follows. This protein is a positive regulator of gene expression of beta-lactamase (AmpC). This is HTH-type transcriptional activator AmpR (ampR) from Yersinia enterocolitica.